We begin with the raw amino-acid sequence, 610 residues long: Glutamine--fructose-6-phosphate aminotransferase [isomerizing] (610 aa).

C2 acts as the Nucleophile; for GATase activity in catalysis. A Glutamine amidotransferase type-2 domain is found at 2-218 (CGIVGAVAQR…EGDVAEITRR (217 aa)). SIS domains are found at residues 286–426 (AAEI…QQGR) and 459–600 (LATD…VDQP). Residue K605 is the For Fru-6P isomerization activity of the active site.

Homodimer.

Its subcellular location is the cytoplasm. The catalysed reaction is D-fructose 6-phosphate + L-glutamine = D-glucosamine 6-phosphate + L-glutamate. Functionally, catalyzes the first step in hexosamine metabolism, converting fructose-6P into glucosamine-6P using glutamine as a nitrogen source. The polypeptide is Glutamine--fructose-6-phosphate aminotransferase [isomerizing] (Vibrio vulnificus (strain YJ016)).